The following is a 566-amino-acid chain: Urease subunit alpha (566 aa).

In terms of domain architecture, Urease spans 128-566; the sequence is GGIDTHIHFI…LPMAQRYFLF (439 aa). Positions 133, 135, and 216 each coordinate Ni(2+). Residue lysine 216 is modified to N6-carboxylysine. Histidine 218 serves as a coordination point for substrate. Ni(2+) is bound by residues histidine 245 and histidine 271. Catalysis depends on histidine 319, which acts as the Proton donor. Aspartate 359 provides a ligand contact to Ni(2+).

Belongs to the metallo-dependent hydrolases superfamily. Urease alpha subunit family. Heterotrimer of UreA (gamma), UreB (beta) and UreC (alpha) subunits. Three heterotrimers associate to form the active enzyme. It depends on Ni cation as a cofactor. Carboxylation allows a single lysine to coordinate two nickel ions.

It is found in the cytoplasm. The enzyme catalyses urea + 2 H2O + H(+) = hydrogencarbonate + 2 NH4(+). It functions in the pathway nitrogen metabolism; urea degradation; CO(2) and NH(3) from urea (urease route): step 1/1. The chain is Urease subunit alpha from Pseudomonas fluorescens (strain Pf0-1).